The sequence spans 201 residues: Adenylyl-sulfate kinase (201 aa).

The disordered stretch occupies residues 1–23 (MALHDENVVWHSHPVTPQQREQH). 35-42 (GLSGSGKS) provides a ligand contact to ATP. Ser-109 serves as the catalytic Phosphoserine intermediate.

This sequence belongs to the APS kinase family.

It carries out the reaction adenosine 5'-phosphosulfate + ATP = 3'-phosphoadenylyl sulfate + ADP + H(+). It functions in the pathway sulfur metabolism; hydrogen sulfide biosynthesis; sulfite from sulfate: step 2/3. Functionally, catalyzes the synthesis of activated sulfate. This is Adenylyl-sulfate kinase from Escherichia coli O127:H6 (strain E2348/69 / EPEC).